The sequence spans 528 residues: MKINLSMRELVSRLSTTLKTAIALSVLTACTANDSVSLTSNISNTSGVLLESQTKITDGALHFDGKKLNHNTFENPSKSQAYDYFFGRNISAHGDAVKPYKHFVFMTWYKGGKEERNVMLSRFNTKTGVVKTIQFPHRHTGFRGDPLVGESHNTIGLAVSPLNGTIHMVYDMHAYVDDDETGRFKGRFVDDFFRYSFSVAGAADVPDDEFTLEQFVKDTSELSQGADDYKHLTMTGNLQDKENFSALTYPKFYTSDDGELLHYMRWGGNNNGAYYFNKYDAKNQKWTRFTPFNHKDQKTHGNAYNWGLYGQMKYINGKLRVGFQQRSANNDDRFKYQNGVYYAYSDHPDGLGNWKNVDGEDMTWPLVNSDEIKIFEPGDYIDHTAPNSVHIVTGFDWTVTENDDVHFITHVRSTDTKRSDYKEVSIHAFKPANAVDFTITTDFTGADSIYTSGDSIFIIGLKNGYPFVEKAKGGSNDFEVVYQQASGVKFDHGTIHIENGKAYYYLMEKGAGNALPLHLQVIDLGVTE.

An N-terminal signal peptide occupies residues 1–29 (MKINLSMRELVSRLSTTLKTAIALSVLTA). C30 carries the N-palmitoyl cysteine lipid modification. C30 is lipidated: S-diacylglycerol cysteine. A substrate-binding site is contributed by 151–152 (SH). H152 acts as the Proton donor/acceptor in catalysis. Ca(2+)-binding residues include D218, D228, and K230. 2 residues coordinate substrate: Y309 and R326. The Ca(2+) site is built by N329, D332, and F334. Residue H390 participates in substrate binding.

The protein belongs to the polysaccharide lyase 24 family.

It localises to the secreted. Its subcellular location is the cell membrane. In terms of biological role, ulvan lyase involved in ulvan degradation. Ulvan is the main polysaccharide component of the Ulvales (green seaweed) cell wall. It is composed of disaccharide building blocks comprising 3-sulfated rhamnose (Rha3S) linked to D-glucuronic acid (GlcA), L-iduronic acid (IduA), or D-xylose (Xyl). Ulvan lyase catalyzes preferentially the endolytic cleavage of the glycosidic bond between Rha3S and the uronic acid GlcA, but not IduA, producing oligosaccharides that have unsaturated 4-deoxy-L-threo-hex-4-enopyranosiduronic acid (deltaUA) at the non-reducing end. The most abundant end products in the degradation of the ulvan polysaccharide were deltaUA-Rha3S disaccharides and deltaUA-Rha3S-IduA-Rha3S and deltaUA-Rha3S-Xyl-Rha3S tetrasaccharides. This is Ulvan lyase, short isoform from Alteromonas sp. (strain LOR).